A 318-amino-acid chain; its full sequence is MKQNTYSPLVSIIIPVYNGANYMREAIDSALAQTYKNIEIIVVNDGSKDKTETIALSYGDKICYFYKENGGCGSALNYGIKNMKGEYFSWLSHDDLYYPNKIEHQINILNKLDNKDVIVYCGYELIDQKSHSLYFVKPDQRYSKEKLDISLFPLLHSLIHGCTLLIPSILFKKIGLFDESLKYTHDYDLWFKFLRVSSVYFDHEVLIKSRVHDAQTTNTALNQLEEYEALWSGFLKKLTKQEMIMIKGSTHQFLSDIAVFFKKNGYIKSYQLALAMTDKKIIGGFCTFIIKEIIYSLRKYGINTTITKIYTWIRKNRK.

This sequence belongs to the glycosyltransferase 2 family.

This is an uncharacterized protein from Rickettsia typhi (strain ATCC VR-144 / Wilmington).